A 238-amino-acid polypeptide reads, in one-letter code: Ribonuclease PH (238 aa).

Phosphate-binding positions include Arg86 and 124 to 126 (GTR).

It belongs to the RNase PH family. In terms of assembly, homohexameric ring arranged as a trimer of dimers.

It catalyses the reaction tRNA(n+1) + phosphate = tRNA(n) + a ribonucleoside 5'-diphosphate. Phosphorolytic 3'-5' exoribonuclease that plays an important role in tRNA 3'-end maturation. Removes nucleotide residues following the 3'-CCA terminus of tRNAs; can also add nucleotides to the ends of RNA molecules by using nucleoside diphosphates as substrates, but this may not be physiologically important. Probably plays a role in initiation of 16S rRNA degradation (leading to ribosome degradation) during starvation. This Parvibaculum lavamentivorans (strain DS-1 / DSM 13023 / NCIMB 13966) protein is Ribonuclease PH.